A 328-amino-acid chain; its full sequence is Stress response kinase A (328 aa).

Aspartate 201 serves as the catalytic Proton acceptor. 2 residues coordinate Mg(2+): asparagine 206 and aspartate 217. The active site involves aspartate 217.

Belongs to the SrkA/RdoA protein kinase family. In terms of assembly, monomer. Requires Mg(2+) as cofactor.

It is found in the cytoplasm. The enzyme catalyses L-seryl-[protein] + ATP = O-phospho-L-seryl-[protein] + ADP + H(+). It catalyses the reaction L-threonyl-[protein] + ATP = O-phospho-L-threonyl-[protein] + ADP + H(+). In terms of biological role, a protein kinase that phosphorylates Ser and Thr residues. Probably acts to suppress the effects of stress linked to accumulation of reactive oxygen species. Probably involved in the extracytoplasmic stress response. The sequence is that of Stress response kinase A from Escherichia coli O6:H1 (strain CFT073 / ATCC 700928 / UPEC).